A 280-amino-acid polypeptide reads, in one-letter code: Hematopoietically-expressed homeobox protein HHEX homolog (280 aa).

Disordered stretches follow at residues 1–35 (MSTLQYPGPPPPSSMNLHNPHMNHHHGLVGPGLAP) and 221–280 (RRVK…EKEA). A DNA-binding region (homeobox) is located at residues 165 to 224 (RKGGQVRFSNDQTMELEKKFESQKYLSPPERKKLAKLLQLSERQVKTWFQNRRAKWRRVK). The span at 232 to 252 (GEGDENSHEKPRDLDRDDFSR) shows a compositional bias: basic and acidic residues.

The protein localises to the nucleus. In terms of biological role, transcription factor that may play a central role in activating or maintaining gene expression in the vegetal pole. Part of a gene regulatory circuit with Erg and Tgif that operates early in mesoderm development. This Patiria miniata (Bat star) protein is Hematopoietically-expressed homeobox protein HHEX homolog.